A 1049-amino-acid chain; its full sequence is Self-sufficient cytochrome P450 monooxygenase CYP505E4 (1049 aa).

A heme-binding site is contributed by Cys-405. Polar residues predominate over residues 461-470 (SATALSQHNM). The interval 461–491 (SATALSQHNMSAGATASPGSSTHLAGDENGQ) is disordered. The span at 471-482 (SAGATASPGSST) shows a compositional bias: low complexity. One can recognise a Flavodoxin-like domain in the interval 499 to 640 (ISFFYGSNSG…DLEVWEETNL (142 aa)). FMN-binding positions include 505–509 (SNSGT) and 584–616 (VFGCGHQDWTKTFYRIPILIDDLMHKAGATRLT). Positions 678 to 906 (RDLVEGKVTA…RPAKDAFHLP (229 aa)) constitute an FAD-binding FR-type domain.

It in the N-terminal section; belongs to the cytochrome P450 family. It depends on FAD as a cofactor. Requires FMN as cofactor. The cofactor is heme.

The enzyme catalyses 2 oxidized [cytochrome P450] + NADPH = 2 reduced [cytochrome P450] + NADP(+) + H(+). The catalysed reaction is an organic molecule + reduced [NADPH--hemoprotein reductase] + O2 = an alcohol + oxidized [NADPH--hemoprotein reductase] + H2O + H(+). It catalyses the reaction dodecanoate + reduced [NADPH--hemoprotein reductase] + O2 = 5-hydroxydodecanoate + oxidized [NADPH--hemoprotein reductase] + H2O + H(+). It carries out the reaction dodecan-1-ol + reduced [NADPH--hemoprotein reductase] + O2 = 1,5-dodecanediol + oxidized [NADPH--hemoprotein reductase] + H2O + H(+). The enzyme catalyses dodecanoate + reduced [NADPH--hemoprotein reductase] + O2 = 9-hydroxydodecanoate + oxidized [NADPH--hemoprotein reductase] + H2O + H(+). The catalysed reaction is dodecan-1-ol + reduced [NADPH--hemoprotein reductase] + O2 = 1,4-dodecanediol + oxidized [NADPH--hemoprotein reductase] + H2O + H(+). It catalyses the reaction dodecan-1-ol + reduced [NADPH--hemoprotein reductase] + O2 = 1,6-dodecanediol + oxidized [NADPH--hemoprotein reductase] + H2O + H(+). In terms of biological role, self-sufficient cytochrome P450 monooxygenase that catalyzes the regioselective in-chain hydroxylation of alkanes, fatty alcohols, and fatty acids at the omega-7 position. Performs hydroxylation of C10-C16 n-alkanes and C12 and C14 fatty alcohols; and thereby enables the one step biocatalytic synthesis of rare alcohols such as 5-dodecanol and 7-tetradecanol. Converts 1-dodecanol into 1,5-dodecanediol as major product with very little sub-terminally hydroxylated products with the 1,4-dodecanediol and 1,6-dodecanediol more abundant. Converts dodecanoic acid to 5-hydroxydodecanoic acid which can be further converted into delta-dodecalactone by lactonization of the 5-hydroxy acid at low pH. Also gives sub-terminal hydroxylation of dodecanoic acid with 9-hydroxydodecanoic acid being the second most abundant product. Does not show any significant activity toward tetradecanoic acid. The polypeptide is Self-sufficient cytochrome P450 monooxygenase CYP505E4 (Penicillium camemberti (strain FM 013)).